The sequence spans 347 residues: N-acetyl-gamma-glutamyl-phosphate reductase (347 aa).

C155 is an active-site residue.

Belongs to the NAGSA dehydrogenase family. Type 1 subfamily.

It localises to the cytoplasm. The enzyme catalyses N-acetyl-L-glutamate 5-semialdehyde + phosphate + NADP(+) = N-acetyl-L-glutamyl 5-phosphate + NADPH + H(+). It participates in amino-acid biosynthesis; L-arginine biosynthesis; N(2)-acetyl-L-ornithine from L-glutamate: step 3/4. Its function is as follows. Catalyzes the NADPH-dependent reduction of N-acetyl-5-glutamyl phosphate to yield N-acetyl-L-glutamate 5-semialdehyde. This Akkermansia muciniphila (strain ATCC BAA-835 / DSM 22959 / JCM 33894 / BCRC 81048 / CCUG 64013 / CIP 107961 / Muc) protein is N-acetyl-gamma-glutamyl-phosphate reductase.